Here is a 78-residue protein sequence, read N- to C-terminus: Large ribosomal subunit protein bL28 (78 aa).

The interval 1–21 is disordered; that stretch reads MSRVCQVTGKKPMVGNNRSHA.

The protein belongs to the bacterial ribosomal protein bL28 family.

In Shewanella baltica (strain OS223), this protein is Large ribosomal subunit protein bL28.